A 188-amino-acid chain; its full sequence is Ribosome-recycling factor (188 aa).

The protein belongs to the RRF family.

Its subcellular location is the cytoplasm. Its function is as follows. Responsible for the release of ribosomes from messenger RNA at the termination of protein biosynthesis. May increase the efficiency of translation by recycling ribosomes from one round of translation to another. This Caulobacter vibrioides (strain NA1000 / CB15N) (Caulobacter crescentus) protein is Ribosome-recycling factor.